The following is a 299-amino-acid chain: ATP phosphoribosyltransferase (299 aa).

It belongs to the ATP phosphoribosyltransferase family. Long subfamily. Requires Mg(2+) as cofactor.

It localises to the cytoplasm. It catalyses the reaction 1-(5-phospho-beta-D-ribosyl)-ATP + diphosphate = 5-phospho-alpha-D-ribose 1-diphosphate + ATP. It functions in the pathway amino-acid biosynthesis; L-histidine biosynthesis; L-histidine from 5-phospho-alpha-D-ribose 1-diphosphate: step 1/9. Feedback inhibited by histidine. Its function is as follows. Catalyzes the condensation of ATP and 5-phosphoribose 1-diphosphate to form N'-(5'-phosphoribosyl)-ATP (PR-ATP). Has a crucial role in the pathway because the rate of histidine biosynthesis seems to be controlled primarily by regulation of HisG enzymatic activity. This chain is ATP phosphoribosyltransferase, found in Shewanella loihica (strain ATCC BAA-1088 / PV-4).